The chain runs to 454 residues: Phenylalanine--tRNA ligase, mitochondrial (454 aa).

Substrate is bound by residues 141–144, Arg-163, 170–172, 177–179, Glu-266, and Phe-291; these read SAHQ, VHY, and QME. The interval 327–347 is disordered; it reads KSISTSSSSSSSSSSSSSSTL. A compositionally biased stretch (low complexity) spans 328-347; the sequence is SISTSSSSSSSSSSSSSSTL. In terms of domain architecture, FDX-ACB spans 361–454; it reads SKYPSCFKDV…LENHLSVKLR (94 aa).

It belongs to the class-II aminoacyl-tRNA synthetase family. In terms of assembly, monomer.

It is found in the mitochondrion matrix. The enzyme catalyses tRNA(Phe) + L-phenylalanine + ATP = L-phenylalanyl-tRNA(Phe) + AMP + diphosphate + H(+). In terms of biological role, is responsible for the charging of tRNA(Phe) with phenylalanine in mitochondrial translation. This chain is Phenylalanine--tRNA ligase, mitochondrial (mpheS), found in Dictyostelium discoideum (Social amoeba).